Here is a 207-residue protein sequence, read N- to C-terminus: Guanylate kinase (207 aa).

Residues 6–185 (GLLIVLSGPS…AKERIQSIVE (180 aa)) form the Guanylate kinase-like domain. 13 to 20 (GPSGVGKG) is an ATP binding site.

Belongs to the guanylate kinase family.

It localises to the cytoplasm. The enzyme catalyses GMP + ATP = GDP + ADP. Functionally, essential for recycling GMP and indirectly, cGMP. The protein is Guanylate kinase of Staphylococcus haemolyticus (strain JCSC1435).